The chain runs to 468 residues: MGTVHARSLDPLPMNGPDFGSPDDADLVEVEPEKKQEILENKDVVVQRVHFEGLGRTKDDLIAHEIGQVFKAKNLIEVMRKSHEAREKLLRLGVFRNVEVLIDTSEGEDAVPNGLDVTFEVTELRRLTGSYNTMVGNNEGSMVLGLKFPNLFGRAEKMTFQFSYGTKETSYGLSFFKPQVGNFERNFSVNLYKVTGQFPWSSLRETDRGVSAEINFPIWKTSHTLKWEGVWRELGCLARTASFAIREESGHTLKSSLSHTMVIDSRNASILPKRGALLKINQELAGYTGGDVSFLKEDFELQLNKQLAWDSVLSTSLWGGMLVPVGDRPSSIADRFYLGGPTSVRGFSMYSIGPQSEGDYLGGEAYWAGGVHLYTPLPFRPGRGGFGDLFRTHFFLNAGNLCNLNYGEGPRAHLQRLAECIRWSYGAGLVLRLGNIARLELNYCIPMGVQSGDRICDGVQFGAGIRFL.

A disordered region spans residues Met-1–Ala-25. The POTRA domain occupies Val-44–Leu-124.

It belongs to the SAM50/omp85 family. In terms of assembly, associates with the mitochondrial contact site and cristae organizing system (MICOS) complex (also known as MINOS or MitOS complex).

It is found in the mitochondrion outer membrane. Functionally, may play a role in the maintenance of the structure of mitochondrial cristae. This Xenopus laevis (African clawed frog) protein is Sorting and assembly machinery component 50 homolog B (samm50-b).